We begin with the raw amino-acid sequence, 318 residues long: Ankyrin repeat domain-containing protein 1 (318 aa).

The stretch at 37–77 (ALEKQEDLKTTSKSLIELEEEKQIKEKQLKSELLKKKLEER) forms a coiled coil. ANK repeat units lie at residues 118 to 147 (VDQT…DPNT), 151 to 180 (YKRT…NIEF), 184 to 213 (LEST…AINA), 217 to 246 (LLST…DLHA), 250 to 279 (EGDT…DLNI), and 283 to 314 (AGKT…KNSH).

Its subcellular location is the nucleus. Functionally, may act as a nuclear transcription factor that negatively regulates the expression of cardiac genes. The polypeptide is Ankyrin repeat domain-containing protein 1 (ankrd1) (Xenopus tropicalis (Western clawed frog)).